Here is a 213-residue protein sequence, read N- to C-terminus: Uridine kinase (213 aa).

Residue 15–22 coordinates ATP; that stretch reads GASASGKS.

It belongs to the uridine kinase family.

The protein resides in the cytoplasm. The catalysed reaction is uridine + ATP = UMP + ADP + H(+). The enzyme catalyses cytidine + ATP = CMP + ADP + H(+). It functions in the pathway pyrimidine metabolism; CTP biosynthesis via salvage pathway; CTP from cytidine: step 1/3. Its pathway is pyrimidine metabolism; UMP biosynthesis via salvage pathway; UMP from uridine: step 1/1. This chain is Uridine kinase, found in Sodalis glossinidius (strain morsitans).